Reading from the N-terminus, the 420-residue chain is UDP-N-acetylglucosamine 1-carboxyvinyltransferase (420 aa).

A phosphoenolpyruvate-binding site is contributed by 22–23 (KN). UDP-N-acetyl-alpha-D-glucosamine is bound at residue Arg-91. Residue Cys-115 is the Proton donor of the active site. Cys-115 is subject to 2-(S-cysteinyl)pyruvic acid O-phosphothioketal. UDP-N-acetyl-alpha-D-glucosamine contacts are provided by residues 120–124 (RPVDL), 160–163 (KVSV), Asp-305, and Ile-327.

This sequence belongs to the EPSP synthase family. MurA subfamily.

The protein resides in the cytoplasm. It catalyses the reaction phosphoenolpyruvate + UDP-N-acetyl-alpha-D-glucosamine = UDP-N-acetyl-3-O-(1-carboxyvinyl)-alpha-D-glucosamine + phosphate. It functions in the pathway cell wall biogenesis; peptidoglycan biosynthesis. Functionally, cell wall formation. Adds enolpyruvyl to UDP-N-acetylglucosamine. In Pectobacterium carotovorum subsp. carotovorum (strain PC1), this protein is UDP-N-acetylglucosamine 1-carboxyvinyltransferase.